The chain runs to 490 residues: Ketol-acid reductoisomerase (NADP(+)) (490 aa).

One can recognise a KARI N-terminal Rossmann domain in the interval 17 to 208 (LAQCEFMNAD…GGHRAGVLKS (192 aa)). NADP(+) is bound by residues 45–48 (CGAQ), R68, R76, S78, and 108–110 (DKQ). The active site involves H132. An NADP(+)-binding site is contributed by G158. 2 KARI C-terminal knotted domains span residues 209-353 (SFIA…AEQE) and 355-486 (FDNG…MSAM). D217, E221, E389, and E393 together coordinate Mg(2+). Position 414 (S414) interacts with substrate.

It belongs to the ketol-acid reductoisomerase family. It depends on Mg(2+) as a cofactor.

It catalyses the reaction (2R)-2,3-dihydroxy-3-methylbutanoate + NADP(+) = (2S)-2-acetolactate + NADPH + H(+). The enzyme catalyses (2R,3R)-2,3-dihydroxy-3-methylpentanoate + NADP(+) = (S)-2-ethyl-2-hydroxy-3-oxobutanoate + NADPH + H(+). It participates in amino-acid biosynthesis; L-isoleucine biosynthesis; L-isoleucine from 2-oxobutanoate: step 2/4. Its pathway is amino-acid biosynthesis; L-valine biosynthesis; L-valine from pyruvate: step 2/4. Functionally, involved in the biosynthesis of branched-chain amino acids (BCAA). Catalyzes an alkyl-migration followed by a ketol-acid reduction of (S)-2-acetolactate (S2AL) to yield (R)-2,3-dihydroxy-isovalerate. In the isomerase reaction, S2AL is rearranged via a Mg-dependent methyl migration to produce 3-hydroxy-3-methyl-2-ketobutyrate (HMKB). In the reductase reaction, this 2-ketoacid undergoes a metal-dependent reduction by NADPH to yield (R)-2,3-dihydroxy-isovalerate. This chain is Ketol-acid reductoisomerase (NADP(+)), found in Pseudoalteromonas translucida (strain TAC 125).